Here is a 452-residue protein sequence, read N- to C-terminus: Phosphoglucosamine mutase (452 aa).

The Phosphoserine intermediate role is filled by S108. The Mg(2+) site is built by S108, D247, D249, and D251. Phosphoserine is present on S108.

The protein belongs to the phosphohexose mutase family. Requires Mg(2+) as cofactor. Activated by phosphorylation.

The enzyme catalyses alpha-D-glucosamine 1-phosphate = D-glucosamine 6-phosphate. In terms of biological role, catalyzes the conversion of glucosamine-6-phosphate to glucosamine-1-phosphate. The polypeptide is Phosphoglucosamine mutase (Burkholderia mallei (strain NCTC 10247)).